Here is a 335-residue protein sequence, read N- to C-terminus: Probable cytosolic iron-sulfur protein assembly protein Ciao1 (335 aa).

WD repeat units lie at residues 12-51 (GHKG…WTTK), 57-96 (GHKR…FECN), 101-140 (GHEN…EFEC), 146-185 (PHTQ…SDWD), 192-231 (SHTS…NDAG), 250-289 (QHSR…KRDE), and 301-335 (AHDQ…KMTE).

It belongs to the WD repeat CIA1 family.

Its function is as follows. Essential component of the cytosolic iron-sulfur (Fe/S) protein assembly machinery. Required for the maturation of extramitochondrial Fe/S proteins. The sequence is that of Probable cytosolic iron-sulfur protein assembly protein Ciao1 from Drosophila ananassae (Fruit fly).